The sequence spans 207 residues: Sodium/potassium-transporting ATPase subunit beta-1-interacting protein 1 (207 aa).

3 consecutive transmembrane segments (helical) span residues 2–22 (GRCSGRCTLVGICCLQLAAAL), 35–55 (APILANFLHIMVVILGILGTL), and 62–82 (LILYSIWLALWVAWNAFIICF). Asn-100 carries an N-linked (GlcNAc...) asparagine glycan. The chain crosses the membrane as a helical span at residues 147-167 (ALSSALQIFLALFGFVYACYV).

This sequence belongs to the NKAIN family. In terms of assembly, interacts with atp1b1 C-terminus.

The protein localises to the cell membrane. The protein is Sodium/potassium-transporting ATPase subunit beta-1-interacting protein 1 (nkain1) of Xenopus tropicalis (Western clawed frog).